Here is a 149-residue protein sequence, read N- to C-terminus: Transcriptional regulator MraZ (149 aa).

SpoVT-AbrB domains are found at residues K7–H54 and A83–N126.

Belongs to the MraZ family. In terms of assembly, forms oligomers.

The protein localises to the cytoplasm. The protein resides in the nucleoid. The chain is Transcriptional regulator MraZ from Rickettsia typhi (strain ATCC VR-144 / Wilmington).